The chain runs to 120 residues: Large ribosomal subunit protein uL22 (120 aa).

The tract at residues 1 to 20 is disordered; it reads MFVNRRYTARGKNLPSSPKK.

It belongs to the universal ribosomal protein uL22 family. In terms of assembly, part of the 50S ribosomal subunit.

Functionally, this protein binds specifically to 23S rRNA; its binding is stimulated by other ribosomal proteins, e.g. L4, L17, and L20. It is important during the early stages of 50S assembly. It makes multiple contacts with different domains of the 23S rRNA in the assembled 50S subunit and ribosome. Its function is as follows. The globular domain of the protein is located near the polypeptide exit tunnel on the outside of the subunit, while an extended beta-hairpin is found that lines the wall of the exit tunnel in the center of the 70S ribosome. This is Large ribosomal subunit protein uL22 from Borrelia turicatae (strain 91E135).